The sequence spans 73 residues: Defensin-like protein 10 (73 aa).

Residues 1 to 28 (MKLSLRLISALLMSVMLLFATGMGPVEA) form the signal peptide. Disulfide bonds link C31–C73, C42–C62, C48–C67, and C52–C69.

It belongs to the DEFL family.

It is found in the secreted. Confers broad-spectrum resistance to pathogens. In Arabidopsis thaliana (Mouse-ear cress), this protein is Defensin-like protein 10 (PDF2.6).